The primary structure comprises 221 residues: D-glycero-alpha-D-manno-heptose 1-phosphate guanylyltransferase (221 aa).

Belongs to the D-alpha-D-heptose-1-P guanylyltransferase family.

The catalysed reaction is D-glycero-alpha-D-manno-heptose 1-phosphate + GTP + H(+) = GDP-D-glycero-alpha-D-manno-heptose + diphosphate. It participates in nucleotide-sugar biosynthesis; GDP-D-glycero-alpha-D-manno-heptose biosynthesis; GDP-D-glycero-alpha-D-manno-heptose from D-glycero-alpha-D-manno-heptose 7-phosphate: step 3/3. It functions in the pathway capsule biogenesis; capsule polysaccharide biosynthesis. In terms of biological role, catalyzes the GDP transfer from GTP to D-glycero-alpha-D-manno-heptose 1-phosphate, yielding GDP-D-alpha-D-heptose. Is able to use ATP, CTP or UTP as substrate in the presence of pyrophosphatase, but at a significantly slower rate. Can also form GDP-alpha-D-mannose from alpha-D-mannose 1-phosphate and GTP. The protein is D-glycero-alpha-D-manno-heptose 1-phosphate guanylyltransferase of Campylobacter jejuni subsp. jejuni serotype O:2 (strain ATCC 700819 / NCTC 11168).